The sequence spans 431 residues: Adenylosuccinate synthetase (431 aa).

GTP-binding positions include 13–19 (GDEGKGK) and 41–43 (GHT). Residue aspartate 14 is the Proton acceptor of the active site. Aspartate 14 and glycine 41 together coordinate Mg(2+). Residues 14 to 17 (DEGK), 39 to 42 (NAGH), threonine 130, arginine 144, glutamine 225, threonine 240, and arginine 304 each bind IMP. Residue histidine 42 is the Proton donor of the active site. 300-306 (ATTGRKR) contacts substrate. GTP is bound by residues arginine 306, 332–334 (KLD), and 415–417 (STG).

Belongs to the adenylosuccinate synthetase family. Homodimer. Requires Mg(2+) as cofactor.

Its subcellular location is the cytoplasm. It catalyses the reaction IMP + L-aspartate + GTP = N(6)-(1,2-dicarboxyethyl)-AMP + GDP + phosphate + 2 H(+). The protein operates within purine metabolism; AMP biosynthesis via de novo pathway; AMP from IMP: step 1/2. Plays an important role in the de novo pathway of purine nucleotide biosynthesis. Catalyzes the first committed step in the biosynthesis of AMP from IMP. The chain is Adenylosuccinate synthetase from Shewanella woodyi (strain ATCC 51908 / MS32).